Here is a 324-residue protein sequence, read N- to C-terminus: ATP-dependent 6-phosphofructokinase (324 aa).

Gly-15 is a binding site for ATP. Position 25 to 29 (25 to 29 (RGVVR)) interacts with ADP. ATP contacts are provided by residues 76–77 (RF) and 106–109 (GDGS). Asp-107 lines the Mg(2+) pocket. 130–132 (TID) contacts substrate. Asp-132 functions as the Proton acceptor in the catalytic mechanism. Arg-159 is an ADP binding site. Substrate is bound by residues Arg-167 and 174–176 (MGR). ADP is bound by residues 190-192 (GCE), Lys-216, and 218-220 (KRH). Substrate is bound by residues Glu-227, Arg-248, and 254 to 257 (HIQR).

It belongs to the phosphofructokinase type A (PFKA) family. ATP-dependent PFK group I subfamily. Prokaryotic clade 'B1' sub-subfamily. As to quaternary structure, homotetramer. It depends on Mg(2+) as a cofactor.

Its subcellular location is the cytoplasm. It catalyses the reaction beta-D-fructose 6-phosphate + ATP = beta-D-fructose 1,6-bisphosphate + ADP + H(+). The protein operates within carbohydrate degradation; glycolysis; D-glyceraldehyde 3-phosphate and glycerone phosphate from D-glucose: step 3/4. Its activity is regulated as follows. Allosterically activated by ADP and other diphosphonucleosides, and allosterically inhibited by phosphoenolpyruvate. Functionally, catalyzes the phosphorylation of D-fructose 6-phosphate to fructose 1,6-bisphosphate by ATP, the first committing step of glycolysis. This chain is ATP-dependent 6-phosphofructokinase, found in Haemophilus ducreyi (strain 35000HP / ATCC 700724).